Here is a 1626-residue protein sequence, read N- to C-terminus: MAGLRGNAVAGLLWMLLLWSGGGGCQAQRAGCKSVHYDLVFLLDTSSSVGKEDFEKVRQWVANLVDTFEVGPDRTRVGVVRYSDRPTTAFELGLFGSQEEVKAAARRLAYHGGNTNTGDALRYITARSFSPHAGGRPRDRAYKQVAILLTDGRSQDLVLDAAAAAHRAGIRIFAVGVGEALKEELEEIASEPKSAHVFHVSDFNAIDKIRGKLRRRLCENVLCPSVRVEGDRFKHTNGGTKEITGFDLMDLFSVKEILGKRENGAQSSYVRMGSFPVVQSTEDVFPQGLPDEYAFVTTFRFRKTSRKEDWYIWQVIDQYSIPQVSIRLDGENKAVEYNAVGAMKDAVRVVFRGSRVNDLFDRDWHKMALSIQAQNVSLHIDCALVQTLPIEERENIDIQGKTVIGKRLYDSVPIDFDLQRIVIYCDSRHAELETCCDIPSGPCQVTVVTEPPPPPPPQRPPTPGSEQIGFLKTINCSCPAGEKGEMGVAGPMGLPGPKGDIGAIGPVGAPGPKGEKGDVGIGPFGQGEKGEKGSLGLPGPPGRDGSKGMRGEPGELGEPGLPGEVGMRGPQGPPGLPGPPGRVGAPGLQGERGEKGTRGEKGERGLDGFPGKPGDTGQQGRPGPSGVAGPQGEKGDVGPAGPPGVPGSVVQQEGLKGEQGAPGPRGHQGAPGPPGARGPIGPEGRDGPPGLQGLRGKKGDMGPPGIPGLLGLQGPPGPPGVPGPPGPGGSPGLPGEIGFPGKPGPPGPTGPPGKDGPNGPPGPPGTKGEPGERGEDGLPGKPGLRGEIGEQGLAGRPGEKGEAGLPGAPGFPGVRGEKGDQGEKGELGLPGLKGDRGEKGEAGPAGPPGLPGTTSLFTPHPRMPGEQGPKGEKGDPGLPGEPGLQGRPGELGPQGPTGPPGAKGQEGAHGAPGAAGNPGAPGHVGAPGPSGPPGSVGAPGLRGTPGKDGERGEKGAAGEEGSPGPVGPRGDPGAPGLPGPPGKGKDGEPGLRGSPGLPGPLGTKAACGKVRGSENCALGGQCVKGDRGAPGIPGSPGSRGDPGIGVAGPPGPSGPPGDKGSPGSRGLPGFPGPQGPAGRDGAPGNPGERGPPGKPGLSSLLSPGDINLLAKDVCNDCPPGPPGLPGLPGFKGDKGVPGKPGREGTEGKKGEAGPPGLPGPPGIAGPQGSQGERGADGEVGQKGDQGHPGVPGFMGPPGNPGPPGADGIAGAAGPPGIQGSPGKEGPPGPQGPSGLPGIPGEEGKEGRDGKPGPPGEPGKAGEPGLPGPEGARGPPGFKGHTGDSGAPGPRGESGAMGLPGQEGLPGKDGDTGPTGPQGPQGPRGPPGKNGSPGSPGEPGPSGTPGQKGSKGENGSPGLPGFLGPRGPPGEPGEKGVPGKEGVPGKPGEPGFKGERGDPGIKGDKGPPGGKGQPGDPGIPGHKGHTGLMGPQGLPGENGPVGPPGPPGQPGFPGLRGESPSMETLRRLIQEELGKQLETRLAYLLAQMPPAYMKSSQGRPGPPGPPGKDGLPGRAGPMGEPGRPGQGGLEGPSGPIGPKGERGAKGDPGAPGVGLRGEMGPPGIPGQPGEPGYAKDGLPGIPGPQGETGPAGHPGLPGPPGPPGQCDPSQCAYFASLAARPGNVKGP.

An N-terminal signal peptide occupies residues 1 to 27; that stretch reads MAGLRGNAVAGLLWMLLLWSGGGGCQA. Positions 38-213 constitute a VWFA domain; sequence DLVFLLDTSS…NAIDKIRGKL (176 aa). The region spanning 239 to 427 is the Laminin G-like domain; sequence GTKEITGFDL…LQRIVIYCDS (189 aa). N-linked (GlcNAc...) asparagine glycosylation occurs at Asn375. Collagen-like domains are found at residues 481–520, 526–565, 566–625, 657–708, 714–773, 774–833, 868–922, 925–984, 1047–1095, 1118–1155, 1156–1215, 1249–1308, 1315–1374, 1387–1446, 1495–1550, and 1575–1604; these read GEKGEMGVAGPMGLPGPKGDIGAIGPVGAPGPKGEKGDVG, QGEKGEKGSLGLPGPPGRDGSKGMRGEPGELGEPGLPGEV, GMRG…PGPS, GEQG…GIPG, GPPG…PGER, GEDG…PGLK, GPKG…GAPG, GAPG…PGKG, AGPP…PGKP, PPGPPGLPGLPGFKGDKGVPGKPGREGTEGKKGEAGPP, GLPG…AGPP, GKPG…PGKD, GPQG…PGEK, GEPG…PGPP, SQGR…PGAP, and DGLPGIPGPQGETGPAGHPGLPGPPGPPGQ. 4 disordered regions span residues 506–1002, 1019–1103, 1119–1458, and 1491–1609; these read PVGA…GPLG, GGQC…LLSP, PGPP…RGES, and YMKS…DPSQ. Residues 544–553 are compositionally biased toward basic and acidic residues; the sequence is DGSKGMRGEP. The segment covering 571-580 has biased composition (pro residues); sequence QGPPGLPGPP. Positions 591-606 are enriched in basic and acidic residues; it reads ERGEKGTRGEKGERGL. Residues 661–670 are compositionally biased toward low complexity; it reads APGPRGHQGA. Pro residues-rich tracts occupy residues 715–728 and 742–751; these read PPGPPGVPGPPGPG and KPGPPGPTGP. 2 stretches are compositionally biased toward basic and acidic residues: residues 769–778 and 815–826; these read EPGERGEDGL and RGEKGDQGEKGE. The segment covering 908-939 has biased composition (low complexity); it reads AHGAPGAAGNPGAPGHVGAPGPSGPPGSVGAP. Basic and acidic residues predominate over residues 945–957; the sequence is PGKDGERGEKGAA. Composition is skewed to low complexity over residues 959–974 and 1056–1065; these read EEGSPGPVGPRGDPGA and PGDKGSPGSR. Basic and acidic residues-rich tracts occupy residues 1131 to 1151 and 1173 to 1185; these read KGDKGVPGKPGREGTEGKKGE and RGADGEVGQKGDQ. Residues 1205–1223 show a composition bias toward low complexity; that stretch reads ADGIAGAAGPPGIQGSPGK. Residues 1241–1250 show a composition bias toward basic and acidic residues; it reads EEGKEGRDGK. The span at 1260–1275 shows a compositional bias: low complexity; that stretch reads AGEPGLPGPEGARGPP. Positions 1379-1389 are enriched in low complexity; that stretch reads KEGVPGKPGEP. Residues 1391–1404 are compositionally biased toward basic and acidic residues; it reads FKGERGDPGIKGDK. Over residues 1405 to 1414 the composition is skewed to gly residues; the sequence is GPPGGKGQPG. Over residues 1440–1449 the composition is skewed to pro residues; sequence VGPPGPPGQP. Positions 1521–1530 are enriched in gly residues; the sequence is GRPGQGGLEG. The span at 1595–1604 shows a compositional bias: pro residues; sequence LPGPPGPPGQ.

Belongs to the fibril-associated collagens with interrupted helices (FACIT) family. As to expression, restrictive expression is observed at tissue junctions such as the myotendinous junction in skeletal and heart muscle, the articular cartilage-synovial fluid junction, or the border between the anagen hair follicle and the dermis in the skin. It is deposited in the basement membrane zone of the myotendinous junction and the hair follicle and associated with the extrafibrillar matrix in cartilage.

It localises to the secreted. It is found in the extracellular space. The protein localises to the extracellular matrix. The protein resides in the cytoplasm. In terms of biological role, acts as a cell adhesion ligand for skin epithelial cells and fibroblasts. The polypeptide is Collagen alpha-1(XXII) chain (COL22A1) (Homo sapiens (Human)).